The sequence spans 90 residues: Small ribosomal subunit protein bS16 (90 aa).

Belongs to the bacterial ribosomal protein bS16 family.

This is Small ribosomal subunit protein bS16 from Streptococcus sanguinis (strain SK36).